Reading from the N-terminus, the 1583-residue chain is Dynamin-binding protein (1583 aa).

An N-acetylmethionine modification is found at methionine 1. SH3 domains are found at residues 2–61 (EAGS…IVTI), 66–126 (EGER…ELCL), 145–204 (YSMG…LLGP), and 243–302 (QPGT…LFSK). 3 disordered regions span residues 217–244 (HNDC…EEQP), 306–329 (EETM…DCRE), and 366–464 (ECEV…RGMY). The segment covering 224 to 243 (GEEETPTGEEERGPEEDEEQ) has biased composition (acidic residues). Residues 366–379 (ECEVHKSSHQDEGT) are compositionally biased toward basic and acidic residues. The segment covering 406–442 (ETINGVSSQSQVPFRPRWQQNQYYSTTGRGHLSTEQY) has biased composition (polar residues). Residue serine 495 is modified to Phosphoserine. 2 disordered regions span residues 594–656 (RGSS…PSAQ) and 671–693 (LFTH…QTLD). Residues 637–653 (PEPPLAMRPSRPAPLPP) show a composition bias toward pro residues. The span at 675 to 685 (ESCESPEKEGP) shows a compositional bias: basic and acidic residues. A coiled-coil region spans residues 742-762 (LEFYESNIESLNMELQQLREM). The 184-residue stretch at 791-974 (KRAKVIEELL…KEINVNINEY (184 aa)) folds into the DH domain. The BAR domain occupies 1015 to 1224 (LKHLTGFAPQ…LKVAGREGNL (210 aa)). In terms of domain architecture, SH3 5 spans 1292–1355 (PPEKLFQAER…YSSFLKPYNT (64 aa)). The tract at residues 1357–1496 (RSHSDVSVGS…GRNGQGKDLT (140 aa)) is disordered. Residues 1361–1387 (DVSVGSHSSTESEQSSSSPRFPRQNSS) are compositionally biased toward low complexity. Polar residues predominate over residues 1388–1414 (GTLTFNPGSMAVSFTSGSCQKQPQDAT). Low complexity predominate over residues 1433 to 1456 (SESSPSRCPSDPDSSPQPRSWDSP). An SH3 6 domain is found at 1519–1582 (EGNQVYFAVY…PSNYIRKAEY (64 aa)).

Binds DNM1 via its N-terminal SH3 domains. The C-terminal SH3 domain binds a complex containing actin, tubulin, Hsp70 and actin-regulatory proteins, such as ENAH, EVL, WIRE, CR16, WAVE1 and NAP1L1. Interacts with FASLG. Interacts (via SH3 domain 6) with WASL. Interacts (via SH3 domain 6) interacts with ENAH. Interacts (via C-terminal domain) with TJP1; required for the apical cell-cell junction localization of DNMBP.

It localises to the cytoplasm. The protein resides in the golgi apparatus. Its subcellular location is the golgi stack. The protein localises to the cytoskeleton. It is found in the synapse. It localises to the cell junction. In terms of biological role, plays a critical role as a guanine nucleotide exchange factor (GEF) for CDC42 in several intracellular processes associated with the actin and microtubule cytoskeleton. Regulates the structure of apical junctions in epithelial cells. Participates in the normal lumenogenesis of epithelial cell cysts by regulating spindle orientation. Plays a key role in ciliogenesis and cyst formation. May play a role in membrane trafficking between the cell surface and the Golgi. This is Dynamin-binding protein from Canis lupus familiaris (Dog).